Consider the following 349-residue polypeptide: Hydrophobic dipeptide epimerase (349 aa).

Substrate contacts are provided by residues T127 and 153-155; that span reads KIK. The Mg(2+) site is built by D186, E212, and D237. Substrate-binding positions include K259 and 309–311; that span reads DLD.

It belongs to the mandelate racemase/muconate lactonizing enzyme family. Requires Mg(2+) as cofactor.

In terms of biological role, catalyzes the epimerization a variety of hydrophobic dipeptides. Epimerase activity is highest with L-Ala-L-Tyr, and lower with L-Ala-L-Met, L-Ala-L-Phe, L-Tyr-L-Ala, L-Tyr-L-Met and L-Tyr-L-Trp (in vitro). The polypeptide is Hydrophobic dipeptide epimerase (Flavobacteria bacterium (strain MS024-2A)).